Consider the following 486-residue polypeptide: uncharacterized protein (486 aa).

A helical transmembrane segment spans residues 18–38; sequence TLLQLFVFTVICVFVLSGLAI. A compositionally biased stretch (basic and acidic residues) spans 62–79; it reads DRQKQMEKQQDSGEKRSF. 2 disordered regions span residues 62-82 and 117-147; these read DRQK…FEST and IESS…GPQM. The span at 119 to 132 shows a compositional bias: low complexity; that stretch reads SSSSSDSSSSSSSS. 3 consecutive transmembrane segments (helical) span residues 324–344, 365–385, and 451–471; these read VVYL…MMSI, IGQF…LASV, and MLIL…LPSI.

This sequence belongs to the ABC-4 integral membrane protein family.

It localises to the cell membrane. This is an uncharacterized protein from Bacillus subtilis (strain 168).